Reading from the N-terminus, the 94-residue chain is Trp operon repressor homolog (94 aa).

The DNA-binding element occupies 58–81 (QREIAEKYGVSIAQITRGSNALKG).

The protein belongs to the TrpR family. Homodimer.

The protein localises to the cytoplasm. This protein is an aporepressor. When complexed with L-tryptophan it binds the operator region of the trp operon and prevents the initiation of transcription. In Chlamydia trachomatis serovar L2 (strain ATCC VR-902B / DSM 19102 / 434/Bu), this protein is Trp operon repressor homolog.